The chain runs to 1026 residues: mRNA transport homolog 4 (1026 aa).

The Helicase ATP-binding domain maps to 134 to 290; sequence ILCIDNNQSV…WVASIKQQPV (157 aa). Residue 147–154 participates in ATP binding; it reads AHTSAGKT. The DEIH box motif lies at 238-241; the sequence is DEIH. The 205-residue stretch at 360–564 folds into the Helicase C-terminal domain; it reads NVLKIIRSVA…NMVLNLMRVE (205 aa).

Belongs to the helicase family. SKI2 subfamily.

The protein resides in the nucleus. This Caenorhabditis elegans protein is mRNA transport homolog 4 (mtr-4).